A 520-amino-acid polypeptide reads, in one-letter code: Catalase easC (520 aa).

His-71 is a catalytic residue. Tyr-361 is a heme binding site.

It belongs to the catalase family. Requires heme as cofactor.

It participates in alkaloid biosynthesis; ergot alkaloid biosynthesis. Catalase; part of the gene cluster that mediates the biosynthesis of fumiclavanine C, a fungal ergot alkaloid. DmaW catalyzes the first step of ergot alkaloid biosynthesis by condensing dimethylallyl diphosphate (DMAP) and tryptophan to form 4-dimethylallyl-L-tryptophan. The second step is catalyzed by the methyltransferase easF that methylates 4-dimethylallyl-L-tryptophan in the presence of S-adenosyl-L-methionine, resulting in the formation of 4-dimethylallyl-L-abrine. The catalase easC and the FAD-dependent oxidoreductase easE then transform 4-dimethylallyl-L-abrine to chanoclavine-I which is further oxidized by EasD in the presence of NAD(+), resulting in the formation of chanoclavine-I aldehyde. EasA reduces chanoclavine-I aldehyde to dihydrochanoclavine-I aldehyde that spontaneously dehydrates to form 6,8-dimethyl-6,7-didehydroergoline. EasG then catalyzes the reduction of 6,8-dimethyl-6,7-didehydroergoline to form festuclavine. Hydrolysis of festuclavine by easM then leads to the formation of fumigaclavine B which is in turn acetylated by easN to fumigaclavine A. Finally, easL catalyzes the conversion of fumigaclavine A into fumigaclavine C by attaching a dimethylallyl moiety to C-2 of the indole nucleus. The sequence is that of Catalase easC from Aspergillus fumigatus (strain ATCC MYA-4609 / CBS 101355 / FGSC A1100 / Af293) (Neosartorya fumigata).